Consider the following 78-residue polypeptide: Large ribosomal subunit protein eL20 (78 aa).

Belongs to the eukaryotic ribosomal protein eL20 family. In terms of assembly, part of the 50S ribosomal subunit. Binds 23S rRNA.

This Pyrobaculum neutrophilum (strain DSM 2338 / JCM 9278 / NBRC 100436 / V24Sta) (Thermoproteus neutrophilus) protein is Large ribosomal subunit protein eL20.